Reading from the N-terminus, the 157-residue chain is Protein BeeE (157 aa).

It belongs to the phage portal family.

The polypeptide is Protein BeeE (beeE) (Escherichia coli (strain K12)).